We begin with the raw amino-acid sequence, 170 residues long: Probable T4-type lysozyme 2 (170 aa).

Residue Glu-13 is the Proton donor of the active site. Catalysis depends on Asp-22, which acts as the Nucleophile.

This sequence belongs to the glycosyl hydrolase 24 family.

It catalyses the reaction Hydrolysis of (1-&gt;4)-beta-linkages between N-acetylmuramic acid and N-acetyl-D-glucosamine residues in a peptidoglycan and between N-acetyl-D-glucosamine residues in chitodextrins.. This chain is Probable T4-type lysozyme 2, found in Dictyostelium discoideum (Social amoeba).